A 397-amino-acid chain; its full sequence is Zinc finger transcription factor family protein 30 (397 aa).

The disordered stretch occupies residues 1–40 (MKLEDDKIHSPTNTEEEGYGSDVEVENGTDISGSKGGSGV). The span at 14–27 (TEEEGYGSDVEVEN) shows a compositional bias: acidic residues. 3 consecutive C2H2-type zinc fingers follow at residues 51–74 (FRCSICSKVFCHSSSLSRHRMQAH), 78–102 (YKCTVCRKDISSSESLRTHMFKQHH), and 107–125 (YMCRCCNWAFPDKSLLHIH).

It is found in the nucleus. In Caenorhabditis elegans, this protein is Zinc finger transcription factor family protein 30 (ztf-30).